We begin with the raw amino-acid sequence, 387 residues long: Pepsin A-5 (387 aa).

An N-terminal signal peptide occupies residues 1–15 (MKWLWVLGLVALSEC). The propeptide at 16 to 62 (LVKIPLMKIKSMRENLRESQVLKDYLEKYPRSRAHVLLEQRRNPAVT) is activation peptide. Residues 74–384 (YIGIISIGTP…DRANNRIGLA (311 aa)) enclose the Peptidase A1 domain. D92 is an active-site residue. 2 cysteine pairs are disulfide-bonded: C105–C110 and C266–C270. D275 is an active-site residue. C309 and C343 form a disulfide bridge.

The protein belongs to the peptidase A1 family. As to expression, expressed in glandular chief cells of the neonatal stomach. Expressed in yolk sacs of the placenta (at protein level).

The protein localises to the secreted. It carries out the reaction Preferential cleavage: hydrophobic, preferably aromatic, residues in P1 and P1' positions. Cleaves 1-Phe-|-Val-2, 4-Gln-|-His-5, 13-Glu-|-Ala-14, 14-Ala-|-Leu-15, 15-Leu-|-Tyr-16, 16-Tyr-|-Leu-17, 23-Gly-|-Phe-24, 24-Phe-|-Phe-25 and 25-Phe-|-Tyr-26 bonds in the B chain of insulin.. With respect to regulation, inhibited by pepstatin A. Functionally, shows particularly broad specificity; although bonds involving phenylalanine and leucine are preferred, many others are also cleaved to some extent. May play a role as a specialized neonatal digestive enzyme. The chain is Pepsin A-5 from Mus musculus (Mouse).